The sequence spans 267 residues: tRNA pseudouridine synthase A (267 aa).

D55 (nucleophile) is an active-site residue. Y111 is a substrate binding site.

It belongs to the tRNA pseudouridine synthase TruA family.

It catalyses the reaction uridine(38/39/40) in tRNA = pseudouridine(38/39/40) in tRNA. Its function is as follows. Formation of pseudouridine at positions 38, 39 and 40 in the anticodon stem and loop of transfer RNAs. The protein is tRNA pseudouridine synthase A of Thermococcus kodakarensis (strain ATCC BAA-918 / JCM 12380 / KOD1) (Pyrococcus kodakaraensis (strain KOD1)).